We begin with the raw amino-acid sequence, 209 residues long: Ribosomal RNA large subunit methyltransferase E (209 aa).

The S-adenosyl-L-methionine site is built by G63, W65, D83, D99, and D124. The active-site Proton acceptor is K164.

This sequence belongs to the class I-like SAM-binding methyltransferase superfamily. RNA methyltransferase RlmE family.

The protein resides in the cytoplasm. It carries out the reaction uridine(2552) in 23S rRNA + S-adenosyl-L-methionine = 2'-O-methyluridine(2552) in 23S rRNA + S-adenosyl-L-homocysteine + H(+). Specifically methylates the uridine in position 2552 of 23S rRNA at the 2'-O position of the ribose in the fully assembled 50S ribosomal subunit. The polypeptide is Ribosomal RNA large subunit methyltransferase E (Shewanella putrefaciens (strain CN-32 / ATCC BAA-453)).